Here is a 351-residue protein sequence, read N- to C-terminus: Molybdenum import ATP-binding protein ModC (351 aa).

An ABC transporter domain is found at 1 to 229 (MLKINVKKQL…PLFLPWKLED (229 aa)). 31–38 (GLSGSGKT) contributes to the ATP binding site. The region spanning 289–351 (KTSIRNILHG…FAQIKAVSVL (63 aa)) is the Mop domain.

This sequence belongs to the ABC transporter superfamily. Molybdate importer (TC 3.A.1.8) family. The complex is composed of two ATP-binding proteins (ModC), two transmembrane proteins (ModB) and a solute-binding protein (ModA).

Its subcellular location is the cell inner membrane. It catalyses the reaction molybdate(out) + ATP + H2O = molybdate(in) + ADP + phosphate + H(+). In terms of biological role, part of the ABC transporter complex ModABC involved in molybdenum import. Responsible for energy coupling to the transport system. In Pasteurella multocida (strain Pm70), this protein is Molybdenum import ATP-binding protein ModC.